A 169-amino-acid polypeptide reads, in one-letter code: Crossover junction endodeoxyribonuclease RuvC (169 aa).

Residues aspartate 11, glutamate 71, and aspartate 143 contribute to the active site. Residues aspartate 11, glutamate 71, and aspartate 143 each coordinate Mg(2+).

Belongs to the RuvC family. In terms of assembly, homodimer which binds Holliday junction (HJ) DNA. The HJ becomes 2-fold symmetrical on binding to RuvC with unstacked arms; it has a different conformation from HJ DNA in complex with RuvA. In the full resolvosome a probable DNA-RuvA(4)-RuvB(12)-RuvC(2) complex forms which resolves the HJ. Mg(2+) serves as cofactor.

Its subcellular location is the cytoplasm. It carries out the reaction Endonucleolytic cleavage at a junction such as a reciprocal single-stranded crossover between two homologous DNA duplexes (Holliday junction).. In terms of biological role, the RuvA-RuvB-RuvC complex processes Holliday junction (HJ) DNA during genetic recombination and DNA repair. Endonuclease that resolves HJ intermediates. Cleaves cruciform DNA by making single-stranded nicks across the HJ at symmetrical positions within the homologous arms, yielding a 5'-phosphate and a 3'-hydroxyl group; requires a central core of homology in the junction. The consensus cleavage sequence is 5'-(A/T)TT(C/G)-3'. Cleavage occurs on the 3'-side of the TT dinucleotide at the point of strand exchange. HJ branch migration catalyzed by RuvA-RuvB allows RuvC to scan DNA until it finds its consensus sequence, where it cleaves and resolves the cruciform DNA. The polypeptide is Crossover junction endodeoxyribonuclease RuvC (Rhizobium leguminosarum bv. trifolii (strain WSM2304)).